A 185-amino-acid chain; its full sequence is Guanylate kinase (185 aa).

Residues 4-181 enclose the Guanylate kinase-like domain; sequence GALYVVSGPS…ACNDLISIIE (178 aa). 11–18 contributes to the ATP binding site; it reads GPSGAGKS.

Belongs to the guanylate kinase family.

The protein resides in the cytoplasm. The catalysed reaction is GMP + ATP = GDP + ADP. Functionally, essential for recycling GMP and indirectly, cGMP. This chain is Guanylate kinase, found in Fusobacterium nucleatum subsp. nucleatum (strain ATCC 25586 / DSM 15643 / BCRC 10681 / CIP 101130 / JCM 8532 / KCTC 2640 / LMG 13131 / VPI 4355).